The following is a 239-amino-acid chain: Large ribosomal subunit protein uL2 (239 aa).

The interval Val-200–Lys-239 is disordered. The segment covering Pro-222–Lys-239 has biased composition (basic residues).

It belongs to the universal ribosomal protein uL2 family. As to quaternary structure, part of the 50S ribosomal subunit. Forms a bridge to the 30S subunit in the 70S ribosome.

Functionally, one of the primary rRNA binding proteins. Required for association of the 30S and 50S subunits to form the 70S ribosome, for tRNA binding and peptide bond formation. It has been suggested to have peptidyltransferase activity; this is somewhat controversial. Makes several contacts with the 16S rRNA in the 70S ribosome. The sequence is that of Large ribosomal subunit protein uL2 from Thermococcus kodakarensis (strain ATCC BAA-918 / JCM 12380 / KOD1) (Pyrococcus kodakaraensis (strain KOD1)).